A 183-amino-acid chain; its full sequence is Ribosome maturation factor RimP (183 aa).

It belongs to the RimP family.

It is found in the cytoplasm. Its function is as follows. Required for maturation of 30S ribosomal subunits. The protein is Ribosome maturation factor RimP of Leptothrix cholodnii (strain ATCC 51168 / LMG 8142 / SP-6) (Leptothrix discophora (strain SP-6)).